The primary structure comprises 277 residues: Adaptin ear-binding coat-associated protein 1 (277 aa).

The interval 164–277 (GNITAKKGGT…APQPSNWVQF (114 aa)) is disordered. A compositionally biased stretch (pro residues) spans 187 to 201 (LPPPPGGKVTIPPPS). Thr211 carries the post-translational modification Phosphothreonine. Residues 222 to 234 (SNDSDILLDLDSP) are compositionally biased toward low complexity. A compositionally biased stretch (pro residues) spans 235–245 (APVPTSAPAPA). 2 short sequence motifs (WXXF motif) span residues 254 to 257 (WGDF) and 274 to 277 (WVQF). Residues 258–277 (STASSSVPNQAPQPSNWVQF) show a composition bias toward polar residues.

The protein belongs to the NECAP family. Interacts with AP1G1 and AP2A1 components of the adapter protein complexes AP-1 and AP-2. Interacts with the GAE domain proteins GGA1, GGA2 and GGA3. Interacts with AP2A2. As to expression, expressed predominantly in brain (at protein level).

It is found in the cytoplasmic vesicle. Its subcellular location is the clathrin-coated vesicle membrane. The protein resides in the cell membrane. Its function is as follows. Involved in endocytosis. The sequence is that of Adaptin ear-binding coat-associated protein 1 (Necap1) from Rattus norvegicus (Rat).